The following is a 1010-amino-acid chain: Lysosomal alpha-mannosidase (1010 aa).

Positions 1 to 22 (MVIKKLFILIFCLFLIINEING) are cleaved as a signal peptide. Positions 23–40 (KKTKINDIKKSKPKLSST) are cleaved as a propeptide — pro I. Residues His51 and Asp53 each coordinate Zn(2+). The N-linked (GlcNAc...) asparagine glycan is linked to Asn68. Asp173 and His420 together coordinate Zn(2+). Asp173 serves as the catalytic Nucleophile. Asn480, Asn520, Asn528, Asn539, Asn623, Asn760, Asn784, Asn828, Asn954, and Asn963 each carry an N-linked (GlcNAc...) asparagine glycan. The propeptide at 508–595 (RNEPVRIPIP…GGGKINEKVS (88 aa)) is pro II.

Belongs to the glycosyl hydrolase 38 family. In terms of assembly, tetramer of equimolar amounts of 60 and 58 kDa subunits. It depends on Zn(2+) as a cofactor. Post-translationally, first cleaved into the mature 58 kDa subunit and an intermediate 82 kDa subunit. The latter is then cleaved to its mature 60 kDa subunit form. These events occur in multiple intracellular compartments. The 60 kDa subunit may form one or more intramolecular disulfide bonds.

It is found in the lysosome. The catalysed reaction is Hydrolysis of terminal, non-reducing alpha-D-mannose residues in alpha-D-mannosides.. This is Lysosomal alpha-mannosidase (manA) from Dictyostelium discoideum (Social amoeba).